The chain runs to 404 residues: Dihydrosphingosine 1-phosphate phosphatase YSR3 (404 aa).

Over 1-86 (MTIIQTVTEL…PFRDVYFKYT (86 aa)) the chain is Lumenal. N62 carries an N-linked (GlcNAc...) asparagine glycan. Residues 87 to 107 (SLMGSHMFYVIVLPMPVWLGY) form a helical membrane-spanning segment. At 108–113 (RDLTRD) the chain is on the cytoplasmic side. The helical transmembrane segment at 114-134 (MIYVLGYSIYLSGYLKDYWCL) threads the bilayer. A phosphatase sequence motif I region spans residues 129-137 (KDYWCLPRP). Topologically, residues 135-154 (PRPKSPPVDRITLSEYTTKE) are lumenal. A helical transmembrane segment spans residues 155 to 176 (YGAPSSHSANATAVSLLFFWRI). Residues 158 to 161 (PSSH) are phosphatase sequence motif II. The active-site Proton donor is the H161. Residues 177–182 (CLSDTL) lie on the Cytoplasmic side of the membrane. A helical transmembrane segment spans residues 183–203 (VWPTKLLLLSLVIFYYLTLVF). Over 204 to 215 (GRVYCGMHGMLD) the chain is Lumenal. The interval 204-215 (GRVYCGMHGMLD) is phosphatase sequence motif III. The Nucleophile role is filled by H211. A helical membrane pass occupies residues 216–236 (LFSGAAVGAICFFIRIWVVHA). Residues 237 to 241 (LRNFQ) are Cytoplasmic-facing. The chain crosses the membrane as a helical span at residues 242-262 (IGEHLWFPLLSVAWGLFILFN). Residues 263 to 319 (HVRPIDECPCFEDSVAFIGVVSGLDCSDWLTERYGWNLVCSRYASCGSKVFLRPLVG) lie on the Lumenal side of the membrane. The helical transmembrane segment at 320-340 (VASVIVWKDVISKTAVYTLLI) threads the bilayer. At 341 to 379 (KLLRFHDDRSEKVHFHNETSEEEECLLYSGVSKVEIVGR) the chain is on the cytoplasmic side. The helical transmembrane segment at 380–400 (FLIYAGIPTTVFLLCPVFFTW) threads the bilayer. Over 401–404 (TNLR) the chain is Lumenal.

The protein belongs to the type 2 lipid phosphate phosphatase family.

The protein localises to the endoplasmic reticulum membrane. The enzyme catalyses sphinganine 1-phosphate + H2O = sphinganine + phosphate. Its function is as follows. Dihydrosphingosine 1-phosphate phosphatase required for efficient ceramide synthesis from exogenous sphingoid bases. Involved in endocytosis and calcium-mediated signaling. The protein is Dihydrosphingosine 1-phosphate phosphatase YSR3 of Saccharomyces cerevisiae (strain ATCC 204508 / S288c) (Baker's yeast).